The chain runs to 191 residues: dTTP/UTP pyrophosphatase (191 aa).

Catalysis depends on Asp71, which acts as the Proton acceptor.

This sequence belongs to the Maf family. YhdE subfamily. A divalent metal cation serves as cofactor.

It is found in the cytoplasm. It catalyses the reaction dTTP + H2O = dTMP + diphosphate + H(+). The enzyme catalyses UTP + H2O = UMP + diphosphate + H(+). In terms of biological role, nucleoside triphosphate pyrophosphatase that hydrolyzes dTTP and UTP. May have a dual role in cell division arrest and in preventing the incorporation of modified nucleotides into cellular nucleic acids. The sequence is that of dTTP/UTP pyrophosphatase from Geobacter sulfurreducens (strain ATCC 51573 / DSM 12127 / PCA).